A 404-amino-acid chain; its full sequence is Cysteine desulfurase IscS (404 aa).

Pyridoxal 5'-phosphate is bound by residues 75–76 (AT), N155, Q183, and 203–205 (SAH). K206 carries the N6-(pyridoxal phosphate)lysine modification. T243 contributes to the pyridoxal 5'-phosphate binding site. The Cysteine persulfide intermediate role is filled by C328. C328 provides a ligand contact to [2Fe-2S] cluster.

Belongs to the class-V pyridoxal-phosphate-dependent aminotransferase family. NifS/IscS subfamily. Homodimer. Forms a heterotetramer with IscU, interacts with other sulfur acceptors. Requires pyridoxal 5'-phosphate as cofactor.

It localises to the cytoplasm. It carries out the reaction (sulfur carrier)-H + L-cysteine = (sulfur carrier)-SH + L-alanine. The protein operates within cofactor biosynthesis; iron-sulfur cluster biosynthesis. Its function is as follows. Master enzyme that delivers sulfur to a number of partners involved in Fe-S cluster assembly, tRNA modification or cofactor biosynthesis. Catalyzes the removal of elemental sulfur atoms from cysteine to produce alanine. Functions as a sulfur delivery protein for Fe-S cluster synthesis onto IscU, an Fe-S scaffold assembly protein, as well as other S acceptor proteins. This is Cysteine desulfurase IscS from Tolumonas auensis (strain DSM 9187 / NBRC 110442 / TA 4).